Consider the following 333-residue polypeptide: MVFRSPLDLYSSHFLLPNFADSHHCSLLLASSGGGSGASGGGGGAGGGGGGNRAGGGGAGGAGGGSGGGGSRAPPEELSMFQLPTLNFSPEQVASVCETLEETGDIERLGRFLWSLPVAPGACEAINKHESILRARAVVAFHTGNFRDLYHILENHKFTKESHGKLQAMWLEAHYQEAEKLRGRPLGPVDKYRVRKKFPLPRTIWDGEQKTHCFKERTRSLLREWYLQDPYPNPSKKRELAQATGLTPTQVGNWFKNRRQRDRAAAAKNRLQHQAIGPSGMRSLAEPGCPTHGSAESPSTAASPTTSVSSLTERADTGTSILSVTSSDSECDV.

Residues 57 to 71 are compositionally biased toward gly residues; sequence GGAGGAGGGSGGGGS. 3 disordered regions span residues 57–76, 233–252, and 259–333; these read GGAG…APPE, NPSK…TQVG, and RQRD…ECDV. Residues 73-120 are interaction with TLE5; that stretch reads APPEELSMFQLPTLNFSPEQVASVCETLEETGDIERLGRFLWSLPVAP. Residues 207-266 constitute a DNA-binding region (homeobox); the sequence is GEQKTHCFKERTRSLLREWYLQDPYPNPSKKRELAQATGLTPTQVGNWFKNRRQRDRAAA. Residues 233-235 are bind to RHO promoter; the sequence is NPS. The span at 294-310 shows a compositional bias: low complexity; the sequence is SAESPSTAASPTTSVSS. A compositionally biased stretch (polar residues) spans 317 to 333; the sequence is TGTSILSVTSSDSECDV.

Belongs to the SIX/Sine oculis homeobox family. In terms of assembly, interacts with EYA4; translocates EYA4 from the cytoplasm to the nucleus and promotes activation of their target genes. Interacts with MTA1 and HDAC2; represses its own transcription. Interacts with MTA1; facilitates the binding of SIX3 to the core DNA motif of SIX3 promoter. Interacts with EYA1; promotes EYA1 translocation to the nucleus. Interacts with TLE1 and TLE5 (via Q domain); can act in combination with either TLE1 and/or TLE5 leading to transcriptional repression or activation, respectively. Interacts (via homeobox) with NR4A3; differentially regulates the transcriptional activities NR4A3. Interacts with GMNN. Interacts with TLE4. Expressed in ependymal cells during the formation of the lateral wall.

Its subcellular location is the nucleus. Functionally, transcriptional regulator which can act as both a transcriptional repressor and activator by binding a ATTA homeodomain core recognition sequence on these target genes. During forebrain development represses WNT1 expression allowing zona limitans intrathalamica formation and thereby ensuring proper anterio-posterior patterning of the diencephalon and formation of the rostral diencephalon. Acts as a direct upstream activator of SHH expression in the rostral diencephalon ventral midline and that in turn SHH maintains its expression. In addition, Six3 activity is required for the formation of the telencephalon. During postnatal stages of brain development is necessary for ependymal cell maturation by promoting the maturation of radial glia into ependymal cells through regulation of neuroblast proliferation and migration. Acts on the proliferation and differentiation of neural progenitor cells through activating transcription of CCND1 AND CCND2. During early lens formation plays a role in lens induction and specification by activating directly PAX6 in the presumptive lens ectoderm. In turn PAX6 activates SIX3 resulting in activation of PDGFRA and CCND1 promoting cell proliferation. Also is required for the neuroretina development by directly suppressing WNT8B expression in the anterior neural plate territory. Its action during retina development and lens morphogenesis is TLE5 and TLE4-dependent manner. Furthermore, during eye development regulates several genes expression. Before and during early lens development represses the CRYGF promoter by binding a SIX repressor element. Directly activates RHO transcription, or cooperates with CRX or NRL. Six3 also functions in the formation of the proximodistal axis of the optic cup, and promotes the formation of optic vesicles-like structures. During pituitary development, acts in parallel or alternatively with HESX1 to control cell proliferation through Wnt/beta-catenin pathway. Plays a role in eye development by suppressing WNT1 expression and in dorsal-ventral patterning by repressing BMP signaling pathway. This chain is Homeobox protein SIX3 (Six3), found in Mus musculus (Mouse).